The sequence spans 333 residues: ATP synthase subunit a (333 aa).

The N-terminal stretch at 1–32 is a signal peptide; it reads MIYLHNKRKGMLKRLSALIVIGLLMNLPAVFA. The next 7 membrane-spanning stretches (helical) occupy residues 100-120, 161-181, 185-205, 229-249, 254-274, 279-299, and 300-320; these read HVVM…GVGN, FMPF…IGLV, ATAT…FLVT, LMWI…PFAL, FANM…IFVF, IAPV…LVAF, and LQAY…VAHE.

This sequence belongs to the ATPase A chain family. In terms of assembly, F-type ATPases have 2 components, CF(1) - the catalytic core - and CF(0) - the membrane proton channel. CF(1) has five subunits: alpha(3), beta(3), gamma(1), delta(1), epsilon(1). CF(0) has four main subunits: a, b, b' and c.

The protein resides in the cell inner membrane. In terms of biological role, key component of the proton channel; it plays a direct role in the translocation of protons across the membrane. The sequence is that of ATP synthase subunit a from Chloroherpeton thalassium (strain ATCC 35110 / GB-78).